The following is a 387-amino-acid chain: Succinate--CoA ligase [ADP-forming] subunit beta (387 aa).

One can recognise an ATP-grasp domain in the interval 9 to 236 (RDLFESYGVP…AAAADPLEAK (228 aa)). Residues lysine 45, 52–54 (GRG), alanine 94, and glutamate 99 each bind ATP. Mg(2+)-binding residues include asparagine 191 and aspartate 205. Substrate-binding positions include asparagine 256 and 318 to 320 (GIT).

This sequence belongs to the succinate/malate CoA ligase beta subunit family. As to quaternary structure, heterotetramer of two alpha and two beta subunits. It depends on Mg(2+) as a cofactor.

The enzyme catalyses succinate + ATP + CoA = succinyl-CoA + ADP + phosphate. It catalyses the reaction GTP + succinate + CoA = succinyl-CoA + GDP + phosphate. It functions in the pathway carbohydrate metabolism; tricarboxylic acid cycle; succinate from succinyl-CoA (ligase route): step 1/1. Its function is as follows. Succinyl-CoA synthetase functions in the citric acid cycle (TCA), coupling the hydrolysis of succinyl-CoA to the synthesis of either ATP or GTP and thus represents the only step of substrate-level phosphorylation in the TCA. The beta subunit provides nucleotide specificity of the enzyme and binds the substrate succinate, while the binding sites for coenzyme A and phosphate are found in the alpha subunit. The chain is Succinate--CoA ligase [ADP-forming] subunit beta from Clavibacter michiganensis subsp. michiganensis (strain NCPPB 382).